The sequence spans 172 residues: Peptidyl-prolyl cis-trans isomerase CYP18-4 (172 aa).

Residues 7 to 170 (FFDMSLSGTP…KVVTITDCGQ (164 aa)) form the PPIase cyclophilin-type domain.

This sequence belongs to the cyclophilin-type PPIase family. As to quaternary structure, interacts with A.tumefaciens VirD2. Ubiquitous, with higher levels in roots and flowers. Confined to vascular tissues. Also detected in stigmas, base of siliques and anthers.

It localises to the cytoplasm. It carries out the reaction [protein]-peptidylproline (omega=180) = [protein]-peptidylproline (omega=0). Binds cyclosporin A (CsA). CsA mediates some of its effects via an inhibitory action on PPIase. Functionally, PPIases accelerate the folding of proteins. It catalyzes the cis-trans isomerization of proline imidic peptide bonds in oligopeptides. The protein is Peptidyl-prolyl cis-trans isomerase CYP18-4 (CYP18-4) of Arabidopsis thaliana (Mouse-ear cress).